We begin with the raw amino-acid sequence, 588 residues long: MRTHFCGLVDETLIGQTVTLAGWTDVARNLGGVCFIDLRDHEGIVQVTVEPAEGDANSAEVFKVAASLGYEDVLQVEGVVRARHAVNDKIRTGKVEVIATRITILNKAAPLPFHAHENPGEDTRLKYRYLDLRRPEMQRMQRTRIKLVQALRRHLDARDFQDIETPILTKATPEGARDFLVPARMHPGEFYALPQSPQLFKQILMVAGFDRYYQIARCFRDEALRADRQLEFTQLDMEFAFVRERDVQDFVEDMIRAIFKEVVDVELAAQFPRMTWAEAMRRYGSDKPDLRIALELVDVAELVKTSEFPVFAAAANDADGRVAALRIPGGATLSRKQIDDYAAHAAKYGAKGLAYIKLSESGEVSSPIAKFFGEEAFAALLAHVGAANGDIVFFGAGSYNKVSDFMGALRLKAGKDFGLVAAGWAPLWVTDFPMFEWDEEAQRYVALHHPFTAPAVDDIADLRANARTAVSRGYDMVLNGNEIGGGSIRIHRPDMQSAVFELLGIGAEEARAKFGFLLDALNYGAPPHGGIAFGIDRIAALMAGTESIRDVIPFPKTTGAQDLMTDAPSPIAAEQLAEVHVQVRPKQA.

L-aspartate is bound at residue Glu174. Residues 198–201 are aspartate; sequence QLFK. Arg220 is an L-aspartate binding site. Residues 220 to 222 and Gln229 contribute to the ATP site; that span reads RDE. His448 is a binding site for L-aspartate. Glu482 is an ATP binding site. Arg489 is an L-aspartate binding site. 534 to 537 lines the ATP pocket; it reads GIDR.

This sequence belongs to the class-II aminoacyl-tRNA synthetase family. Type 1 subfamily. As to quaternary structure, homodimer.

The protein resides in the cytoplasm. It catalyses the reaction tRNA(Asp) + L-aspartate + ATP = L-aspartyl-tRNA(Asp) + AMP + diphosphate. Functionally, catalyzes the attachment of L-aspartate to tRNA(Asp) in a two-step reaction: L-aspartate is first activated by ATP to form Asp-AMP and then transferred to the acceptor end of tRNA(Asp). The chain is Aspartate--tRNA ligase from Xanthomonas campestris pv. campestris (strain B100).